The chain runs to 70 residues: DNA-directed RNA polymerase subunit omega (70 aa).

This sequence belongs to the RNA polymerase subunit omega family. The RNAP catalytic core consists of 2 alpha, 1 beta, 1 beta' and 1 omega subunit. When a sigma factor is associated with the core the holoenzyme is formed, which can initiate transcription.

It carries out the reaction RNA(n) + a ribonucleoside 5'-triphosphate = RNA(n+1) + diphosphate. In terms of biological role, promotes RNA polymerase assembly. Latches the N- and C-terminal regions of the beta' subunit thereby facilitating its interaction with the beta and alpha subunits. The sequence is that of DNA-directed RNA polymerase subunit omega from Bacillus cereus (strain B4264).